The chain runs to 330 residues: Malate dehydrogenase (330 aa).

15–21 (GGTGQIA) contributes to the NAD(+) binding site. Positions 96 and 102 each coordinate substrate. Residues Asn109, Gln116, and 133 to 135 (VGN) each bind NAD(+). Substrate-binding residues include Asn135 and Arg166. Residue His191 is the Proton acceptor of the active site.

The protein belongs to the LDH/MDH superfamily. MDH type 2 family.

The enzyme catalyses (S)-malate + NAD(+) = oxaloacetate + NADH + H(+). In terms of biological role, catalyzes the reversible oxidation of malate to oxaloacetate. In Chlamydia caviae (strain ATCC VR-813 / DSM 19441 / 03DC25 / GPIC) (Chlamydophila caviae), this protein is Malate dehydrogenase.